A 693-amino-acid polypeptide reads, in one-letter code: Phenoloxidase subunit 2 (693 aa).

The propeptide occupies 1 to 51 (MADVFESLELLFDRPNEPLITPKGENNSVFQLTEQFLTEDYANNGIELNNR). Residues N26 and N64 are each glycosylated (N-linked (GlcNAc...) asparagine). Residues H213, H217, and H243 each coordinate Cu cation. The Proton acceptor role is filled by E351. H366, H370, and H406 together coordinate Cu cation. Residues N462 and N494 are each glycosylated (N-linked (GlcNAc...) asparagine). Cystine bridges form between C583–C627 and C585–C634. N-linked (GlcNAc...) asparagine glycosylation occurs at N680.

As to quaternary structure, heterodimer. Cu(2+) serves as cofactor. Post-translationally, the N-terminus is blocked. Synthesized by hemocytes and released into the hemolymph plasma.

It localises to the secreted. It carries out the reaction 2 L-dopa + O2 = 2 L-dopaquinone + 2 H2O. The enzyme catalyses L-tyrosine + O2 = L-dopaquinone + H2O. This is a copper-containing oxidase that functions in the formation of pigments such as melanins and other polyphenolic compounds. Catalyzes the rate-limiting conversions of tyrosine to DOPA, DOPA to DOPA-quinone and possibly 5,6 dihydroxyindole to indole-5'6 quinone. The chain is Phenoloxidase subunit 2 from Bombyx mori (Silk moth).